The sequence spans 494 residues: Histidine--tRNA ligase (494 aa).

This sequence belongs to the class-II aminoacyl-tRNA synthetase family. In terms of assembly, homodimer.

It localises to the cytoplasm. The catalysed reaction is tRNA(His) + L-histidine + ATP = L-histidyl-tRNA(His) + AMP + diphosphate + H(+). This chain is Histidine--tRNA ligase, found in Cereibacter sphaeroides (strain ATCC 17023 / DSM 158 / JCM 6121 / CCUG 31486 / LMG 2827 / NBRC 12203 / NCIMB 8253 / ATH 2.4.1.) (Rhodobacter sphaeroides).